We begin with the raw amino-acid sequence, 226 residues long: Endonuclease V (226 aa).

Residues aspartate 43 and aspartate 111 each contribute to the Mg(2+) site.

Belongs to the endonuclease V family. Mg(2+) serves as cofactor.

The protein localises to the cytoplasm. It catalyses the reaction Endonucleolytic cleavage at apurinic or apyrimidinic sites to products with a 5'-phosphate.. In terms of biological role, DNA repair enzyme involved in the repair of deaminated bases. Selectively cleaves double-stranded DNA at the second phosphodiester bond 3' to a deoxyinosine leaving behind the intact lesion on the nicked DNA. In Nocardia farcinica (strain IFM 10152), this protein is Endonuclease V.